A 271-amino-acid chain; its full sequence is ATP synthase subunit a (271 aa).

The next 5 membrane-spanning stretches (helical) occupy residues 47–67 (WENI…AYLG), 107–127 (FLGT…VPLM), 133–153 (SLNI…FLNI), 209–229 (ILIG…ETFV), and 235–255 (LPFM…FTLL).

It belongs to the ATPase A chain family. F-type ATPases have 2 components, CF(1) - the catalytic core - and CF(0) - the membrane proton channel. CF(1) has five subunits: alpha(3), beta(3), gamma(1), delta(1), epsilon(1). CF(0) has three main subunits: a(1), b(2) and c(9-12). The alpha and beta chains form an alternating ring which encloses part of the gamma chain. CF(1) is attached to CF(0) by a central stalk formed by the gamma and epsilon chains, while a peripheral stalk is formed by the delta and b chains.

It is found in the cell inner membrane. Functionally, key component of the proton channel; it plays a direct role in the translocation of protons across the membrane. The polypeptide is ATP synthase subunit a (Protochlamydia amoebophila (strain UWE25)).